Consider the following 702-residue polypeptide: Methionine--tRNA ligase (702 aa).

The short motif at 23-33 is the 'HIGH' region element; it reads PYANGPLHLGH. Zn(2+) contacts are provided by Cys-154, Cys-157, Cys-167, and Cys-170. The 'KMSKS' region signature appears at 341 to 345; sequence KMSKS. Residue Lys-344 participates in ATP binding. Positions 562 to 593 are disordered; that stretch reads LAPPPASAKQQNASMSNTAPPPTAEKPETTAP. Positions 569–578 are enriched in polar residues; sequence AKQQNASMSN. One can recognise a tRNA-binding domain in the interval 599–702; the sequence is DFAKLDLRIG…SSAQPGMPVR (104 aa).

Belongs to the class-I aminoacyl-tRNA synthetase family. MetG type 1 subfamily. In terms of assembly, homodimer. Zn(2+) is required as a cofactor.

The protein localises to the cytoplasm. The enzyme catalyses tRNA(Met) + L-methionine + ATP = L-methionyl-tRNA(Met) + AMP + diphosphate. Its function is as follows. Is required not only for elongation of protein synthesis but also for the initiation of all mRNA translation through initiator tRNA(fMet) aminoacylation. This Xylella fastidiosa (strain 9a5c) protein is Methionine--tRNA ligase.